We begin with the raw amino-acid sequence, 197 residues long: Shikimate kinase (197 aa).

15 to 20 (GSGKSS) contributes to the ATP binding site. Mg(2+) is bound at residue serine 19. Substrate contacts are provided by aspartate 37, arginine 61, and glycine 83. Arginine 121 serves as a coordination point for ATP. Position 148 (arginine 148) interacts with substrate.

This sequence belongs to the shikimate kinase family. In terms of assembly, monomer. Requires Mg(2+) as cofactor.

It localises to the cytoplasm. The catalysed reaction is shikimate + ATP = 3-phosphoshikimate + ADP + H(+). It functions in the pathway metabolic intermediate biosynthesis; chorismate biosynthesis; chorismate from D-erythrose 4-phosphate and phosphoenolpyruvate: step 5/7. Functionally, catalyzes the specific phosphorylation of the 3-hydroxyl group of shikimic acid using ATP as a cosubstrate. The chain is Shikimate kinase from Chlorobium phaeovibrioides (strain DSM 265 / 1930) (Prosthecochloris vibrioformis (strain DSM 265)).